A 376-amino-acid polypeptide reads, in one-letter code: Chorismate synthase ARO2 (376 aa).

S2 carries the post-translational modification N-acetylserine. H17 is a catalytic residue. Positions 39 to 61 are disordered; sequence IQPQLTRRRPGQSKLSTPRDEKD. Active-site residues include H104 and D339.

This sequence belongs to the chorismate synthase family. In terms of assembly, homotetramer.

The catalysed reaction is 5-O-(1-carboxyvinyl)-3-phosphoshikimate = chorismate + phosphate. The enzyme catalyses FMNH2 + NADP(+) = FMN + NADPH + 2 H(+). The protein operates within metabolic intermediate biosynthesis; chorismate biosynthesis; chorismate from D-erythrose 4-phosphate and phosphoenolpyruvate: step 7/7. Functionally, bifunctional chorismate synthase and flavin reductase that catalyzes the conversion of 5-enolpyruvylshikimate 3-phosphate (EPSP) to form chorismate, which is the last common intermediate in the synthesis of the three aromatic amino acids phenylalanine, tyrosine and tryptophan. Also acts as a flavin reductase (FR) able to generate reduced flavin mononucleotide in the presence of NADPH. This Saccharomyces cerevisiae (strain ATCC 204508 / S288c) (Baker's yeast) protein is Chorismate synthase ARO2.